A 349-amino-acid polypeptide reads, in one-letter code: MAATAAEAVASGSGEPREEAGALGPAWDESQLRSYSFPTRPIPRLSQSDPRAEELIENEEPVVLTDTNLVYPALKWDLEYLQENIGNGDFSVYSASTHKFLYYDEKKMANFQNFKPRSNREEMKFHEFVEKLQDIQQRGGEERLYLQQTLNDTVGRKIVMDFLGFNWNWINKQQGKRGWGQLTSNLLLIGMEGNVTPAHYDEQQNFFAQIKGYKRCILFPPDQFECLYPYPVHHPCDRQSQVDFDNPDYERFPNFQNVVGYETVVGPGDVLYIPMYWWHHIESLLNGGITITVNFWYKGAPTPKRIEYPLKAHQKVAIMRNIEKMLGEALGNPQEVGPLLNTMIKGRYN.

Over residues 1–10 the composition is skewed to low complexity; that stretch reads MAATAAEAVA. The tract at residues 1-51 is disordered; sequence MAATAAEAVASGSGEPREEAGALGPAWDESQLRSYSFPTRPIPRLSQSDPR. Residue alanine 2 is modified to N-acetylalanine. The tract at residues 2 to 125 is interaction with VHL; it reads AATAAEAVAS…PRSNREEMKF (124 aa). The JmjC domain maps to 142–312; sequence ERLYLQQTLN…PKRIEYPLKA (171 aa). Tyrosine 145 provides a ligand contact to 2-oxoglutarate. Substrate is bound by residues aspartate 152 and 181 to 183; that span reads QLT. 2-oxoglutarate is bound at residue threonine 196. Residues histidine 199 and aspartate 201 each contribute to the Fe cation site. 201–203 contacts substrate; that stretch reads DEQ. 2-oxoglutarate-binding residues include asparagine 205 and lysine 214. 238–239 is a substrate binding site; it reads RQ. Histidine 279 provides a ligand contact to Fe cation. Position 294 (asparagine 294) interacts with 2-oxoglutarate. Positions 300 and 321 each coordinate substrate.

As to quaternary structure, homodimer; homodimerization is essential for catalytic activity. Interacts with VHL and HIF1A. Part of a complex with VHL, HIF1A and HDAC1 or HDAC2 or HDAC3. Interacts with NFKB1 and NFKBIA. Interacts with NOTCH1, NOTCH2 and NOTCH3 but not with NOTCH4. Interacts with APBA3; binding inhibits HIF1AN binding to HIF1A. Interacts with TNKS2. Interacts with PPP1R12A. Interacts with ASB4. Interacts with UBE3A. Interacts with ANKS3. Interacts with NECAB3; the interaction is indirect and seems to be mediated by APBA3. Requires Fe(2+) as cofactor.

It localises to the nucleus. Its subcellular location is the cytoplasm. It is found in the perinuclear region. It carries out the reaction L-asparaginyl-[hypoxia-inducible factor alpha subunit] + 2-oxoglutarate + O2 = (3S)-3-hydroxy-L-asparaginyl-[hypoxia-inducible factor alpha subunit] + succinate + CO2. It catalyses the reaction L-histidyl-[ankyrin-repeat domain protein] + 2-oxoglutarate + O2 = (3S)-3-hydroxy-L-histidyl-[ankyrin-repeat domain protein] + succinate + CO2. The catalysed reaction is L-asparaginyl-[ankyrin-repeat domain protein] + 2-oxoglutarate + O2 = (3S)-3-hydroxy-L-asparaginyl-[ankyrin-repeat domain protein] + succinate + CO2. The enzyme catalyses L-aspartyl-[ankyrin-repeat domain protein] + 2-oxoglutarate + O2 = (3S)-3-hydroxy-L-aspartyl-[ankyrin-repeat domain protein] + succinate + CO2. Functionally, hydroxylates HIF-1 alpha at 'Asn-803' in the C-terminal transactivation domain (CAD). Functions as an oxygen sensor and, under normoxic conditions, the hydroxylation prevents interaction of HIF-1 with transcriptional coactivators including Cbp/p300-interacting transactivator. Involved in transcriptional repression through interaction with HIF1A, VHL and histone deacetylases. Hydroxylates specific Asn residues within ankyrin repeat domains (ARD) of NFKB1, NFKBIA, NOTCH1, ASB4, PPP1R12A and several other ARD-containing proteins. Also hydroxylates Asp and His residues within ARDs of ANK1 and TNKS2, respectively. Negatively regulates NOTCH1 activity, accelerating myogenic differentiation. Positively regulates ASB4 activity, promoting vascular differentiation. The polypeptide is Hypoxia-inducible factor 1-alpha inhibitor (HIF1AN) (Homo sapiens (Human)).